We begin with the raw amino-acid sequence, 495 residues long: Internal alternative NAD(P)H-ubiquinone oxidoreductase A1, mitochondrial (495 aa).

A mitochondrion-targeting transit peptide spans 1–41 (MPWFKNLIKISKTITNQSSSYKSITPLASPLLTQFLQFTKQ). 61–91 (RIVVLGSGWAGCRLMKDIDTNIYDVVCVSPR) serves as a coordination point for FAD. 228–264 (LHCVVVGGGPTGVEFSGELSDFILKDVHQRYAHVKDY) provides a ligand contact to NAD(+). A Microbody targeting signal motif is present at residues 486-495 (LVFGRDISRI).

This sequence belongs to the NADH dehydrogenase family. FAD serves as cofactor.

The protein resides in the mitochondrion inner membrane. Its subcellular location is the peroxisome. It carries out the reaction a quinone + NADH + H(+) = a quinol + NAD(+). The enzyme catalyses a ubiquinone + NADH + H(+) = a ubiquinol + NAD(+). Alternative NADH-ubiquinone oxidoreductase which catalyzes the oxidation of mitochondrial NADH does not translocate protons across the inner mitochondrial membrane. In Solanum tuberosum (Potato), this protein is Internal alternative NAD(P)H-ubiquinone oxidoreductase A1, mitochondrial (NDA1).